The following is a 539-amino-acid chain: Eukaryotic translation initiation factor 3 subunit L (539 aa).

A PCI domain is found at 306–514; it reads TFSDILLYIQ…IHIADTKVSH (209 aa).

Belongs to the eIF-3 subunit L family. As to quaternary structure, component of the eukaryotic translation initiation factor 3 (eIF-3) complex. The eIF-3 complex interacts with pix.

It localises to the cytoplasm. Component of the eukaryotic translation initiation factor 3 (eIF-3) complex, which is involved in protein synthesis of a specialized repertoire of mRNAs and, together with other initiation factors, stimulates binding of mRNA and methionyl-tRNAi to the 40S ribosome. The eIF-3 complex specifically targets and initiates translation of a subset of mRNAs involved in cell proliferation. The sequence is that of Eukaryotic translation initiation factor 3 subunit L from Drosophila sechellia (Fruit fly).